We begin with the raw amino-acid sequence, 745 residues long: uncharacterized protein (745 aa).

In terms of domain architecture, HTH araC/xylS-type spans 158–256; the sequence is NQVCDYIELH…HQTPKQYRGD (99 aa). DNA-binding regions (H-T-H motif) lie at residues 175–196 and 223–246; these read SELS…TESL and ITDI…KHFT.

This is an uncharacterized protein from Staphylococcus aureus (strain Mu50 / ATCC 700699).